The chain runs to 313 residues: Methionyl-tRNA formyltransferase (313 aa).

112 to 115 (SLLP) contributes to the (6S)-5,6,7,8-tetrahydrofolate binding site.

The protein belongs to the Fmt family.

The catalysed reaction is L-methionyl-tRNA(fMet) + (6R)-10-formyltetrahydrofolate = N-formyl-L-methionyl-tRNA(fMet) + (6S)-5,6,7,8-tetrahydrofolate + H(+). Its function is as follows. Attaches a formyl group to the free amino group of methionyl-tRNA(fMet). The formyl group appears to play a dual role in the initiator identity of N-formylmethionyl-tRNA by promoting its recognition by IF2 and preventing the misappropriation of this tRNA by the elongation apparatus. In Roseiflexus castenholzii (strain DSM 13941 / HLO8), this protein is Methionyl-tRNA formyltransferase.